The following is a 374-amino-acid chain: Putative glutamate--cysteine ligase 2 (374 aa).

This sequence belongs to the glutamate--cysteine ligase type 2 family. YbdK subfamily.

It carries out the reaction L-cysteine + L-glutamate + ATP = gamma-L-glutamyl-L-cysteine + ADP + phosphate + H(+). Functionally, ATP-dependent carboxylate-amine ligase which exhibits weak glutamate--cysteine ligase activity. The sequence is that of Putative glutamate--cysteine ligase 2 from Leptothrix cholodnii (strain ATCC 51168 / LMG 8142 / SP-6) (Leptothrix discophora (strain SP-6)).